A 910-amino-acid polypeptide reads, in one-letter code: Harmonin (910 aa).

The N-terminal domain stretch occupies residues 1–86 (MDRKVAREFR…LTPRRSRKLK (86 aa)). 2 PDZ domains span residues 87-171 (EVRL…GLIP) and 211-295 (KVFI…AGRE). The tract at residues 194–833 (GVRGGLGSPG…KAWNQGGDWI (640 aa)) is mediates interaction with MYO7B. Serine 219 is subject to Phosphoserine. Coiled-coil stretches lie at residues 299–377 (TDRE…WEED) and 417–482 (TIRK…DLEE). Positions 563–688 (VMPHPPSVNS…PPRGPGVSTI (126 aa)) are disordered. The segment covering 564-582 (MPHPPSVNSPSKVPAPPVL) has biased composition (pro residues). Residues 583 to 596 (PSSGHVSSSSSPWV) are compositionally biased toward low complexity. The segment covering 599–611 (TPPPIPIPPPPSI) has biased composition (pro residues). The segment covering 650 to 664 (NTHSGKPSSSPTTER) has biased composition (polar residues). A PDZ 3 domain is found at 752–839 (DVRLLRIKKE…GDWIDLVVAV (88 aa)). The segment at 890-910 (KSRERNQTDPSWRPASSAPSP) is disordered. Residues 899–910 (PSWRPASSAPSP) are compositionally biased toward low complexity.

Part of the IMAC/intermicrovillar adhesion complex/intermicrovillar tip-link complex composed of ANKS4B, MYO7B, USH1C, CDHR2 and CDHR5. Part of a complex composed of USH1C, USH1G and MYO7A. Interacts with F-actin. Interacts with USH2A. Interacts with SLC4A7. Interacts (via PDZ1 domain) with the C-terminus of USHBP1. Interacts (via N-terminus and PDZ 2 domain) with CDH23. Interacts with USH1G. Interacts with MYO7B. Interacts with CDHR2 and CDHR5; may mediate their interaction with MYO7B at the microvilli tip. Interacts (via PDZ 1 domain) with ANKS4B. Interacts (via PDZ 1 domain) with DOCK4. As to expression, detected in stereocilia of cochlear hair cells (at protein level). Isoform 1 is expressed in the eye, cochlea, vestibule, heart, kidney, small intestine and testis; it is barely visible in skeletal muscle, liver, and lung and is absent from the brain. Isoforms 2 and 3 are expressed in the cochlea and vestibule.

It is found in the cytoplasm. The protein localises to the cytosol. The protein resides in the cytoskeleton. Its subcellular location is the cell projection. It localises to the microvillus. Functionally, anchoring/scaffolding protein that is a part of the functional network formed by USH1C, USH1G, CDH23 and MYO7A that mediates mechanotransduction in cochlear hair cells. Required for normal development and maintenance of cochlear hair cell bundles. As part of the intermicrovillar adhesion complex/IMAC plays a role in brush border differentiation, controlling microvilli organization and length. Probably plays a central regulatory role in the assembly of the complex, recruiting CDHR2, CDHR5 and MYO7B to the microvilli tips. The polypeptide is Harmonin (Ush1c) (Mus musculus (Mouse)).